A 254-amino-acid polypeptide reads, in one-letter code: NAD kinase (254 aa).

Asp44 (proton acceptor) is an active-site residue. NAD(+) is bound by residues 44-45 (DG), 114-115 (NE), Asp144, Ala152, 155-160 (TAYNYS), and Ala179.

The protein belongs to the NAD kinase family. It depends on a divalent metal cation as a cofactor.

It is found in the cytoplasm. It catalyses the reaction NAD(+) + ATP = ADP + NADP(+) + H(+). Functionally, involved in the regulation of the intracellular balance of NAD and NADP, and is a key enzyme in the biosynthesis of NADP. Catalyzes specifically the phosphorylation on 2'-hydroxyl of the adenosine moiety of NAD to yield NADP. This chain is NAD kinase, found in Cereibacter sphaeroides (strain ATCC 17023 / DSM 158 / JCM 6121 / CCUG 31486 / LMG 2827 / NBRC 12203 / NCIMB 8253 / ATH 2.4.1.) (Rhodobacter sphaeroides).